A 457-amino-acid chain; its full sequence is Transcription factor CP2-like protein 1 (457 aa).

A mediate transcriptional repression region spans residues 1–52 (MLFWHTQPEHYNQHNSGSYLRDVLALPIFKQEEPQLSPENEARLPPLQYVLC). A Grh/CP2 DB domain is found at 43 to 280 (RLPPLQYVLC…PSPSYNGSPN (238 aa)). Disordered regions lie at residues 219 to 245 (KPKG…KEKY) and 271 to 301 (PSPS…LPVG). The segment covering 221 to 245 (KGADRKQETDREKMEKRTAQEKEKY) has biased composition (basic and acidic residues). Residues 261–365 (PDVAYQVNSA…IRLFNAIKGR (105 aa)) form an SAM2-like domain region. Polar residues predominate over residues 271–281 (PSPSYNGSPNS).

This sequence belongs to the grh/CP2 family. CP2 subfamily. Forms homohexamers via its SAM-like domain. Interacts with MTA1; which is indispensable for TFCP2L1-mediated self-renewal-promoting effect and endoderm-inhibiting action.

The protein resides in the nucleus. Its function is as follows. Transcription factor that facilitates establishment and maintenance of pluripotency in embryonic stem cells (ESCs). With KLF2, acts as the major effector of self-renewal that mediates induction of pluripotency downstream of LIF/STAT3 and Wnt/beta-catenin signaling. Required for normal duct development in the salivary gland and kidney. Coordinates the development of the kidney collecting ducts intercalated (IC) and principal (PC) cells, which regulate acid-base and salt-water homeostasis, respectively. Regulates the expression of IC genes including subunits B1 and D2 of the V-ATPase complex, OXGR1, CA12, SLC4A1, AQP6 and IC-specific transcription factor FOXI1. Also regulates the expression of JAG1 and subsequent notch signaling in the collecting duct. JAG1 initiates notch signaling in PCs but inhibits notch signaling in ICs. Acts as a transcriptional suppressor that may suppress UBP1-mediated transcriptional activation. Modulates the placental expression of CYP11A1. In Pongo abelii (Sumatran orangutan), this protein is Transcription factor CP2-like protein 1 (TFCP2L1).